A 183-amino-acid chain; its full sequence is Ras-related protein Rap-2a (183 aa).

10–17 (GSGGVGKS) contributes to the GTP binding site. Residues 32-40 (YDPTIEDFY) carry the Effector region motif. (Microbial infection) O-linked (Glc) threonine; by C.difficile toxin TcdA, and by P.sordellii toxin TcsL glycosylation occurs at T35. Residues 57–61 (DTAGT) and 116–119 (NKVD) each bind GTP. 2 S-palmitoyl cysteine lipidation sites follow: C176 and C177. Position 180 is a cysteine methyl ester (C180). C180 is lipidated: S-farnesyl cysteine. A propeptide spans 181–183 (NIQ) (removed in mature form).

Belongs to the small GTPase superfamily. Ras family. In terms of assembly, interacts (GTP-bound form) with RUNDC3A. Interacts with RGS14; the interaction is GTP-dependent. Interacts with PLCE1. Interacts with ARHGAP29, SGSM1, SGSM2 and SGSM3. Interacts (GTP-bound form preferentially) with TNIK (via the CNH domain); the interaction is direct and recruits RAP2A to the E3 ubiquitin ligase NEDD4. Interacts with MINK1. Interacts (GTP-bound form preferentially) with MAP4K4. Interacts with cytoskeletal actin. Ubiquitinated; undergoes 'Lys-63' monoubiquitination and diubiquitination by NEDD4. Multiple lysine residues are probably modified. Ubiquitination requires TNIK, prevents interaction with effectors and inactivates RAP2A. Ubiquitination by the ECS(RAB40B) complex leads to RAP2A localization to lamellipodia plasma membrane, activation, and regulation of sorting at early endosomes for recycling to the lamellipodia plasma membrane. In terms of processing, palmitoylated. Palmitoylation is required for association with recycling endosome membranes and activation of TNIK. Post-translationally, (Microbial infection) Glucosylated at Thr-35 by C.difficile toxin TcdA in the colonic epithelium, and by P.sordellii toxin TcsL in the vascular endothelium.

It is found in the midbody. The protein resides in the cell projection. The protein localises to the lamellipodium membrane. Its subcellular location is the golgi apparatus. It localises to the recycling endosome membrane. It is found in the lysosome. It catalyses the reaction GTP + H2O = GDP + phosphate + H(+). Activated by the guanine nucleotide-exchange factors RAPGEF3 and RAPGEF4 in a cAMP-dependent manner. Nucleotide exchange is also specifically stimulated by RAPGEF5, RASGEF1A and RASGEF1B. Functionally, small GTP-binding protein which cycles between a GDP-bound inactive and a GTP-bound active form. In its active form interacts with and regulates several effectors including MAP4K4, MINK1 and TNIK. Part of a signaling complex composed of NEDD4, RAP2A and TNIK which regulates neuronal dendrite extension and arborization during development. More generally, it is part of several signaling cascades and regulates cytoskeletal rearrangements, cell migration, cell adhesion and cell spreading. This is Ras-related protein Rap-2a from Homo sapiens (Human).